A 501-amino-acid polypeptide reads, in one-letter code: Atypical kinase COQ8, mitochondrial (501 aa).

The N-terminal 29 residues, 1–29, are a transit peptide targeting the mitochondrion; sequence MVTNMVKLRNLRRLYCSSRLLRTIQNGRI. The segment at 41-69 is disordered; sequence YTTKSAKEGEENVERKHEEEKKDTLKSSS. Positions 45–65 are enriched in basic and acidic residues; that stretch reads SAKEGEENVERKHEEEKKDTL. The KxGQ motif signature appears at 134 to 137; sequence KIGQ. The Protein kinase domain maps to 188–501; that stretch reads KFDKIPMAAA…LFKEIFAYKV (314 aa). An AAAS motif motif is present at residues 195-198; it reads AAAS. ATP contacts are provided by residues Ser-198, Lys-216, and 303 to 306; that span reads MTRM. Asp-346 acts as the Proton acceptor in catalysis. 2 residues coordinate ATP: Asn-351 and Asp-365.

It belongs to the protein kinase superfamily. ADCK protein kinase family. Forms homopolymers. Predominantly associated with a complex of about 500 kDa.

It localises to the mitochondrion inner membrane. The protein operates within cofactor biosynthesis; ubiquinone biosynthesis. In terms of biological role, atypical kinase involved in the biosynthesis of coenzyme Q, also named ubiquinone, an essential lipid-soluble electron transporter for aerobic cellular respiration. Its substrate specificity is still unclear: may act as a protein kinase that mediates phosphorylation of COQ3, COQ5 and/or COQ7. According to other reports, acts as a small molecule kinase, possibly a lipid kinase that phosphorylates a prenyl lipid in the ubiquinone biosynthesis pathway, as suggested by its ability to bind coenzyme Q lipid intermediates. This chain is Atypical kinase COQ8, mitochondrial (COQ8), found in Saccharomyces cerevisiae (strain ATCC 204508 / S288c) (Baker's yeast).